A 342-amino-acid polypeptide reads, in one-letter code: Dihydroorotate dehydrogenase (quinone) (342 aa).

FMN-binding positions include 61-65 and T85; that span reads AGLDK. A substrate-binding site is contributed by K65. Residue 110–114 coordinates substrate; that stretch reads NRMGF. Residues N138 and N171 each coordinate FMN. Position 171 (N171) interacts with substrate. S174 functions as the Nucleophile in the catalytic mechanism. N176 lines the substrate pocket. FMN contacts are provided by K216 and T244. 245-246 is a substrate binding site; that stretch reads NT. FMN-binding positions include G267, G296, and 317-318; that span reads YS.

Belongs to the dihydroorotate dehydrogenase family. Type 2 subfamily. In terms of assembly, monomer. Requires FMN as cofactor.

It localises to the cell membrane. The enzyme catalyses (S)-dihydroorotate + a quinone = orotate + a quinol. Its pathway is pyrimidine metabolism; UMP biosynthesis via de novo pathway; orotate from (S)-dihydroorotate (quinone route): step 1/1. In terms of biological role, catalyzes the conversion of dihydroorotate to orotate with quinone as electron acceptor. In Pseudomonas aeruginosa (strain UCBPP-PA14), this protein is Dihydroorotate dehydrogenase (quinone).